We begin with the raw amino-acid sequence, 324 residues long: Cyclin-dependent kinase 1 (324 aa).

Residues Y4 to F307 form the Protein kinase domain. Residues I10 to V18 and K34 each bind ATP. At T14 the chain carries Phosphothreonine. A Phosphotyrosine modification is found at Y15. D148 (proton acceptor) is an active-site residue. Residue T181 is modified to Phosphothreonine; by CAK.

The protein belongs to the protein kinase superfamily. CMGC Ser/Thr protein kinase family. CDC2/CDKX subfamily. Forms a stable but non-covalent complex with a regulatory subunit (SUC1) and with a cyclin.

The enzyme catalyses L-seryl-[protein] + ATP = O-phospho-L-seryl-[protein] + ADP + H(+). The catalysed reaction is L-threonyl-[protein] + ATP = O-phospho-L-threonyl-[protein] + ADP + H(+). Its activity is regulated as follows. Phosphorylation at Thr-14 or Tyr-15 inactivates the enzyme, while phosphorylation at Thr-181 activates it. Its function is as follows. Cyclin-dependent kinase that acts as a master regulator of the mitotic and meiotic cell cycles. The chain is Cyclin-dependent kinase 1 from Ajellomyces capsulatus (Darling's disease fungus).